Here is a 208-residue protein sequence, read N- to C-terminus: GATA transcription factor 29 (208 aa).

A GATA-type; atypical zinc finger spans residues 155-208 (GMKKCTNMNCNALNTPMWRRGPLGPKSLCNACGIKFRKEEERKAKRNVVIVLDD).

This sequence belongs to the type IV zinc-finger family. Class B subfamily.

The protein localises to the nucleus. In terms of biological role, transcriptional regulator that specifically binds 5'-GATA-3' or 5'-GAT-3' motifs within gene promoters. The sequence is that of GATA transcription factor 29 (GATA29) from Arabidopsis thaliana (Mouse-ear cress).